The chain runs to 261 residues: RING finger and CHY zinc finger domain-containing protein 1 (261 aa).

The segment at 13–80 (QERGQRGCEH…AQQTCEECST (68 aa)) adopts a CHY-type zinc-finger fold. Zn(2+)-binding residues include cysteine 20, histidine 22, cysteine 33, cysteine 34, cysteine 40, cysteine 43, histidine 44, histidine 50, cysteine 62, cysteine 65, cysteine 75, cysteine 78, cysteine 87, cysteine 90, histidine 101, cysteine 102, cysteine 105, cysteine 108, histidine 118, cysteine 119, cysteine 122, cysteine 125, histidine 134, and cysteine 136. The CTCHY-type zinc finger occupies 82-144 (FGEYYCDICH…KCIENVSRQN (63 aa)). The RING-type zinc finger occupies 145-189 (CPICLEDIHTSRVVAHVLPCGHLLHRTCYEEMLKEGYRCPLCMHS). At serine 257 the chain carries Phosphoserine.

In terms of assembly, monomer and homodimer. Interacts with AR, MDM2, KAT5, PLAG1, PLAGL2, COPE, UBE2D2 and GORAB/NTKLBP1. Subject to ubiquitination and proteasomal degradation. Interaction with PLAGL2 or KAT5 enhances protein stability.

It localises to the nucleus. The protein localises to the nucleus speckle. It is found in the cytoplasm. The enzyme catalyses S-ubiquitinyl-[E2 ubiquitin-conjugating enzyme]-L-cysteine + [acceptor protein]-L-lysine = [E2 ubiquitin-conjugating enzyme]-L-cysteine + N(6)-ubiquitinyl-[acceptor protein]-L-lysine.. It functions in the pathway protein modification; protein ubiquitination. Its function is as follows. E3 ubiquitin-protein ligase that mediates ubiquitination of target proteins, including p53/TP53, TP73, HDAC1 and CDKN1B. Mediates ubiquitination and degradation of p53/TP53; preferentially acts on tetrameric p53/TP53. Catalyzes monoubiquitinates the translesion DNA polymerase POLH. Involved in the ribosome-associated quality control (RQC) pathway, which mediates the extraction of incompletely synthesized nascent chains from stalled ribosomes: RCHY1 acts downstream of NEMF and recognizes CAT tails associated with stalled nascent chains, leading to their ubiquitination and degradation. Functionally, has no E3 ubiquitin-protein ligase activity. This chain is RING finger and CHY zinc finger domain-containing protein 1 (RCHY1), found in Homo sapiens (Human).